The following is a 91-amino-acid chain: Small integral membrane protein 12-A (91 aa).

Residues 12–34 (YAPYITFPVAFVVGAVGYQLEWF) form a helical membrane-spanning segment.

Belongs to the SMIM12 family.

It localises to the membrane. The protein is Small integral membrane protein 12-A (smim12-a) of Xenopus laevis (African clawed frog).